The sequence spans 353 residues: Cyclin-dependent kinase-like 1 (353 aa).

Residues 4 to 286 (YDRLSKLGEG…CSELMLHGIF (283 aa)) form the Protein kinase domain. ATP contacts are provided by residues 10 to 18 (LGEGSYGVV) and lysine 33. Residue aspartate 126 is the Proton acceptor of the active site. The disordered stretch occupies residues 331–353 (GGNHGNNNNNGNGINRNFLPTIS). Low complexity predominate over residues 335-347 (GNNNNNGNGINRN).

Belongs to the protein kinase superfamily. Ser/Thr protein kinase family. In terms of tissue distribution, specifically expressed in head and tail ciliated sensory neurons.

It localises to the cell projection. The protein resides in the cilium. The enzyme catalyses L-seryl-[protein] + ATP = O-phospho-L-seryl-[protein] + ADP + H(+). It carries out the reaction L-threonyl-[protein] + ATP = O-phospho-L-threonyl-[protein] + ADP + H(+). Its function is as follows. Modulates cilium assembly. This Caenorhabditis elegans protein is Cyclin-dependent kinase-like 1.